The chain runs to 199 residues: Tumor necrosis factor ligand superfamily member 4 (199 aa).

The Cytoplasmic segment spans residues 1–25 (MEGEGVQPPDENLENGSRPRFKWKK). The helical; Signal-anchor for type II membrane protein transmembrane segment at 26-48 (VLRLVVSGIKAAGLLLCVVYVCL) threads the bilayer. The Extracellular portion of the chain corresponds to 49–199 (QFSSSPAKDS…YSSTVNQVPL (151 aa)). The THD domain occupies 59 to 176 (PIQRLRAPVT…QINDGELIIV (118 aa)). Intrachain disulfides connect C70/C163 and C98/C184. N-linked (GlcNAc...) asparagine glycosylation is found at N91 and N157.

Belongs to the tumor necrosis factor family. Homotrimer. As to expression, detected in T-cell lines, but not in a macrophage cell line.

The protein resides in the membrane. In terms of biological role, cytokine that binds to TNFRSF4. Co-stimulates T-cell proliferation and cytokine production. This chain is Tumor necrosis factor ligand superfamily member 4 (Tnfsf4), found in Rattus norvegicus (Rat).